The chain runs to 96 residues: Co-chaperonin GroES (96 aa).

It belongs to the GroES chaperonin family. Heptamer of 7 subunits arranged in a ring. Interacts with the chaperonin GroEL.

The protein localises to the cytoplasm. Its function is as follows. Together with the chaperonin GroEL, plays an essential role in assisting protein folding. The GroEL-GroES system forms a nano-cage that allows encapsulation of the non-native substrate proteins and provides a physical environment optimized to promote and accelerate protein folding. GroES binds to the apical surface of the GroEL ring, thereby capping the opening of the GroEL channel. This is Co-chaperonin GroES from Geotalea uraniireducens (strain Rf4) (Geobacter uraniireducens).